Consider the following 787-residue polypeptide: Transcription factor SOX-6 (787 aa).

The segment at 1–46 is disordered; sequence MSSKQATSPFACAADGEDAMTQDLTSREKEEGSDQHVASHLPLHPI. A compositionally biased stretch (basic and acidic residues) spans 25–34; sequence TSREKEEGSD. The residue at position 119 (T119) is a Phosphothreonine. Residues 184 to 262 are a coiled coil; sequence LAEKERQLST…LLQQQIQVQG (79 aa). Positions 340 to 429 are disordered; it reads PGAKMPSTPQ…KSSIPSPIGG (90 aa). Residues 352-361 are compositionally biased toward polar residues; sequence NTAGTVSPTG. Residue S358 is modified to Phosphoserine. T360 carries the post-translational modification Phosphothreonine. Residues K363 and K376 each participate in a glycyl lysine isopeptide (Lys-Gly) (interchain with G-Cter in SUMO) cross-link. Phosphoserine occurs at positions 398 and 401. Residues 398–420 show a composition bias toward polar residues; the sequence is SPTSPTQNLFPASKTSPVNLPNK. The segment at residues 580–648 is a DNA-binding region (HMG box); sequence IKRPMNAFMV…IHLEKYPNYK (69 aa). Residues 712 to 740 show a composition bias toward polar residues; that stretch reads TPSPQMTSDCSSTSASPEPSLPVIQSTYG. The tract at residues 712–787 is disordered; sequence TPSPQMTSDC…NEAPEAVSAN (76 aa). Residues 755–768 show a composition bias toward acidic residues; the sequence is NGEDEMEMYDDYED.

In terms of assembly, homodimer. Interacts with DAZAP2. May interact with CENPK. In terms of processing, sumoylation inhibits the transcriptional activity.

It localises to the nucleus. It is found in the cytoplasm. Transcription factor that plays a key role in several developmental processes, including neurogenesis, chondrocytes differentiation and cartilage formation. Specifically binds the 5'-AACAAT-3' DNA motif present in enhancers and super-enhancers and promotes expression of genes important for chondrogenesis. Required for overt chondrogenesis when condensed prechondrocytes differentiate into early stage chondrocytes: SOX5 and SOX6 cooperatively bind with SOX9 on active enhancers and super-enhancers associated with cartilage-specific genes, and thereby potentiate SOX9's ability to transactivate. Not involved in precartilaginous condensation, the first step in chondrogenesis, during which skeletal progenitors differentiate into prechondrocytes. Together with SOX5, required to form and maintain a pool of highly proliferating chondroblasts between epiphyses and metaphyses, to form columnar chondroblasts, delay chondrocyte prehypertrophy but promote hypertrophy, and to delay terminal differentiation of chondrocytes on contact with ossification fronts. Binds to the proximal promoter region of the myelin protein MPZ gene, and is thereby involved in the differentiation of oligodendroglia in the developing spinal tube. Binds to the gene promoter of MBP and acts as a transcriptional repressor. This is Transcription factor SOX-6 from Pongo abelii (Sumatran orangutan).